Reading from the N-terminus, the 460-residue chain is Dihydroorotate dehydrogenase (quinone), mitochondrial (460 aa).

A mitochondrion-targeting transit peptide spans 1–32; sequence MAGRAATSSAKWAREFLFRRVSSNPLGATRNC. A helical membrane pass occupies residues 53 to 69; that stretch reads ILTGATIGLAIAGGAYV. FMN contacts are provided by residues 141–145 and Ser165; that span reads AGFDK. Position 145 (Lys145) interacts with substrate. Position 190–194 (190–194) interacts with substrate; the sequence is NRCGF. Positions 213-245 are disordered; the sequence is RMLAETSATSSSPSDDVKPGGKSGPGILGVNLG. Residues Asn243 and Asn274 each coordinate FMN. Residue 274–279 coordinates substrate; sequence NVSSPN. The active-site Nucleophile is Ser277. FMN-binding residues include Lys319 and Ser347. 348 to 349 is a substrate binding site; the sequence is NT. FMN contacts are provided by residues Gly371, Gly400, and 421–422; that span reads YT.

Belongs to the dihydroorotate dehydrogenase family. Type 2 subfamily. The cofactor is FMN.

It localises to the mitochondrion inner membrane. It catalyses the reaction (S)-dihydroorotate + a quinone = orotate + a quinol. The protein operates within pyrimidine metabolism; UMP biosynthesis via de novo pathway; orotate from (S)-dihydroorotate (quinone route): step 1/1. In terms of biological role, catalyzes the conversion of dihydroorotate to orotate with quinone as electron acceptor. This Arabidopsis thaliana (Mouse-ear cress) protein is Dihydroorotate dehydrogenase (quinone), mitochondrial (PYRD).